Reading from the N-terminus, the 312-residue chain is Eukaryotic translation initiation factor 2 subunit 2 (312 aa).

Disordered stretches follow at residues 26 to 104 and 125 to 146; these read AALG…NLDM and ADQA…SSTW. Phosphoserine is present on Ser-44. 2 stretches are compositionally biased toward acidic residues: residues 90 to 102 and 125 to 142; these read AASE…EINL and ADQA…DEDN. Ser-133 carries the post-translational modification Phosphoserine. Residue Thr-145 is modified to Phosphothreonine. The segment at 260 to 284 adopts a C4-type zinc-finger fold; the sequence is CHTCRSPETILQKDTRLFFLQCESC.

The protein belongs to the eIF-2-beta/eIF-5 family. As to quaternary structure, eukaryotic translation initiation factor 2 eIF2 is a heterotrimeric complex composed of an alpha, a beta and a gamma subunit.

The protein localises to the cytoplasm. Its subcellular location is the cytosol. Its function is as follows. Component of the eIF2 complex that functions in the early steps of protein synthesis by forming a ternary complex with GTP and initiator tRNA. This complex binds to a 40S ribosomal subunit, followed by mRNA binding to form a 43S pre-initiation complex (43S PIC). Junction of the 60S ribosomal subunit to form the 80S initiation complex is preceded by hydrolysis of the GTP bound to eIF2 and release of an eIF2-GDP binary complex. In order for eIF2 to recycle and catalyze another round of initiation, the GDP bound to eIF2 must exchange with GTP by way of a reaction catalyzed by eIF2B. This Drosophila melanogaster (Fruit fly) protein is Eukaryotic translation initiation factor 2 subunit 2.